The primary structure comprises 207 residues: Ras-related protein rab7 (207 aa).

GTP-binding positions include Gly-15–Thr-22, Ser-34–Thr-40, Asp-63–Gln-67, Asn-125–Asp-128, and Ala-156–Lys-157. An Effector region motif is present at residues Tyr-37 to Phe-45. 2 S-geranylgeranyl cysteine lipidation sites follow: Cys-205 and Cys-207. The residue at position 207 (Cys-207) is a Cysteine methyl ester.

Belongs to the small GTPase superfamily. Rab family. As to quaternary structure, (Microbial infection) Interacts with Singapore grouper iridoviral proteins VP69 (ORF69) and VP101 (ORF101). Ubiquitously expressed. Expressed in liver, spleen, kidney, brain, intestine, heart, skin, muscle, gill and stomach.

The protein localises to the late endosome membrane. Its subcellular location is the lysosome membrane. Key regulator in endo-lysosomal trafficking. Governs early-to-late endosomal maturation, microtubule minus-end as well as plus-end directed endosomal migration and positioning, and endosome-lysosome transport through different protein-protein interaction cascades. Plays important roles in microbial pathogen infection and survival, as well as in participating in the life cycle of viruses. This chain is Ras-related protein rab7, found in Epinephelus coioides (Orange-spotted grouper).